The following is a 238-amino-acid chain: Nuclear transcription factor Y subunit B-9 (238 aa).

A DNA-binding region spans residues 64–70 (MPIANVI). The subunit association domain (SAD) stretch occupies residues 91-102 (IQECVSEYISFV). The interval 203–238 (RYYQNGSSGQDESSVGGGSSSSINGMPAFDHYGQYK) is disordered. Positions 208 to 227 (GSSGQDESSVGGGSSSSING) are enriched in low complexity.

The protein belongs to the NFYB/HAP3 subunit family. Heterotrimeric transcription factor composed of three components, NF-YA, NF-YB and NF-YC. NF-YB and NF-YC must interact and dimerize for NF-YA association and DNA binding. Interacts with PRN1. As to expression, expressed in green siliques. Present in etiolated seedlings.

The protein localises to the nucleus. Component of the NF-Y/HAP transcription factor complex. The NF-Y complex stimulates the transcription of various genes by recognizing and binding to a CCAAT motif in promoters. Acts as a central regulator of the embryogenesis. Required for the speciation of cotyledon identity and the completion of embryo maturation. Controls seed storage protein genes through the regulation of FUS3 and ABI3. Involved in the blue light (BL) and abscisic acid (ABA) signaling pathways. This Arabidopsis thaliana (Mouse-ear cress) protein is Nuclear transcription factor Y subunit B-9 (NFYB9).